A 782-amino-acid chain; its full sequence is Protein NEDD1 (782 aa).

WD repeat units follow at residues 1-34 (MMSNLVEPSWRLLAASGGDTVKLFDVSADSGDPC), 41-80 (SPGCAVNSVKWNHTNLVVASTGEDKKISLWRKNGQSLGTV), 90-130 (SAEE…CIKK), 133-172 (GHTSTITGVMYNCKDEHLASVSVGGDLIVHNLASGARATE), 176-216 (PNGQ…PKMS), 220-260 (QHSA…SSSC), 262-301 (AYEAPFSSLAFGDNGYILVAGTSNGRVVFYDIRGKPQPVT), and 307-358 (SNSE…TPSA). Disordered regions lie at residues 350-393 (PLPS…WPSG) and 467-512 (PIFD…EAWG). 3 stretches are compositionally biased toward polar residues: residues 352–362 (PSTTPSASQSA), 370–386 (VSASTVNASSVEQTPNR), and 488–498 (SFGSITPTASS). Residues 753-782 (VLSSILENQAEQMKELKLLRKENQELRQRL) are a coiled coil.

As to expression, expressed in root meristematic cells.

Its subcellular location is the nucleus envelope. The protein resides in the chromosome. It localises to the centromere. The protein localises to the kinetochore. It is found in the cytoplasm. Its subcellular location is the cytoskeleton. The protein resides in the phragmoplast. It localises to the microtubule organizing center. In terms of biological role, regulates microtubules organization in a centrosome-independent manner. Required for the spindle to be positioned correctly and for the function of gamma-tubulin in organizing phragmoplast microtubules. Component of active gamma-tubulin ring complexes (gamma-TuRCs) associated with cortical microtubules in interphase cells. Mediates gamma-TuRC recruitment to the nucleation sites and is important for determining the ratio of branched to parallel nucleation. May mediate the localization of GCP2 and GCP3 to the nuclear envelope. The chain is Protein NEDD1 from Arabidopsis thaliana (Mouse-ear cress).